Reading from the N-terminus, the 506-residue chain is Steroid (22S)-hydroxylase (506 aa).

A helical transmembrane segment spans residues 12–32; sequence LLFFLPFILLALLTFYTTTVA. Cys449 contacts heme.

It belongs to the cytochrome P450 family. Heme serves as cofactor.

It is found in the membrane. It carries out the reaction a C28-steroid + reduced [NADPH--hemoprotein reductase] + O2 = a (22S)-22-hydroxy C28-steroid + oxidized [NADPH--hemoprotein reductase] + H2O + H(+). The enzyme catalyses campesterol + reduced [NADPH--hemoprotein reductase] + O2 = (22S)-22-hydroxycampesterol + oxidized [NADPH--hemoprotein reductase] + H2O + H(+). It catalyses the reaction campestanol + reduced [NADPH--hemoprotein reductase] + O2 = 6-deoxycathasterone + oxidized [NADPH--hemoprotein reductase] + H2O + H(+). The protein operates within plant hormone biosynthesis; brassinosteroid biosynthesis. In terms of biological role, catalyzes the C22-alpha-hydroxylation step in brassinosteroid biosynthesis, which is the rate-limiting step in this biosynthetic pathway. Catalyzes the conversion of campesterol (CR) to (22S)-22-hydroxycampesterol (22-OHCR, 22-hydroxyCR) and of campestanol (CN) to 6-deoxocathasterone (6-deoxoCT). This Oryza sativa subsp. indica (Rice) protein is Steroid (22S)-hydroxylase.